The sequence spans 429 residues: Palmitoyltransferase ZDHHC23 (429 aa).

The Cytoplasmic portion of the chain corresponds to 1 to 81 (MKPVKKKKTE…RIPWLRGAKK (81 aa)). A helical transmembrane segment spans residues 82 to 102 (VNISILPPLVLLPVLLRVASW). A topological domain (lumenal) is located at residue H103. The helical transmembrane segment at 104-124 (FLLGVVVLTSLPMLALWYYYL) threads the bilayer. At 125–130 (THRRKE) the chain is on the cytoplasmic side. Residues 131–151 (QTLFFLSLGLFSLGYMYYVFL) form a helical membrane-spanning segment. Residues 152 to 159 (QEVVPQGH) lie on the Lumenal side of the membrane. A helical transmembrane segment spans residues 160 to 180 (VGPAQLALLTCGLFLILVALY). Residues 181–296 (RAKKNPGYLS…NSCVGESNHQ (116 aa)) lie on the Cytoplasmic side of the membrane. Positions 212 to 247 (QEKTKGFPGTDTSGSLNNRTLKDDAKGSSRVGLDSP) are disordered. The span at 221–230 (TDTSGSLNNR) shows a compositional bias: polar residues. One can recognise a DHHC domain in the interval 253–303 (DWCAKCQLVRPARAWHCRICGICVRRMDHHCVWINSCVGESNHQAFILALS). Residue C283 is the S-palmitoyl cysteine intermediate of the active site. The helical transmembrane segment at 297-317 (AFILALSIFLLTSVYGISLTL) threads the bilayer. Topologically, residues 318 to 347 (NTICRDRSLFTALFYCPGVYANYSSALSFT) are lumenal. A helical transmembrane segment spans residues 348-368 (CVWYSVIITAGMAYIFLIQLI). The Cytoplasmic portion of the chain corresponds to 369-429 (NISYNVTERE…TVHTPAEDIV (61 aa)). Residues 426-429 (EDIV) form an interaction with NOS1 region.

It belongs to the DHHC palmitoyltransferase family. Interacts with NOS1. As to expression, expressed in the brain (at protein level), with highest levels in olfactory bulb, piriform cortex and hippocampus.

The protein resides in the golgi apparatus membrane. The protein localises to the golgi apparatus. Its subcellular location is the trans-Golgi network membrane. It catalyses the reaction L-cysteinyl-[protein] + hexadecanoyl-CoA = S-hexadecanoyl-L-cysteinyl-[protein] + CoA. Its function is as follows. Palmitoyltransferase that could catalyze the addition of palmitate onto various protein substrates and be involved in a variety of cellular processes. Palmitoyltransferase that mediates palmitoylation of KCNMA1, regulating localization of KCNMA1 to the plasma membrane. May be involved in NOS1 regulation and targeting to the synaptic membrane. The chain is Palmitoyltransferase ZDHHC23 from Rattus norvegicus (Rat).